The sequence spans 758 residues: Meiotic driver SPOK4 (758 aa).

Residues 4 to 41 are a coiled coil; the sequence is KDRITQLLRKLEEAKAREEEAKAREAQERCEKERLQLE. Disordered stretches follow at residues 180-230 and 414-499; these read ELTQ…GVGI and LSSA…MADP. Over residues 181 to 190 the composition is skewed to basic and acidic residues; the sequence is LTQEDDRSSG. The segment covering 416–429 has biased composition (polar residues); it reads SAASSQNTENSEYT. The span at 457–468 shows a compositional bias: basic and acidic residues; it reads NEHDEHDEDHSE.

It localises to the cytoplasm. The protein localises to the nucleus. Its function is as follows. Promotes unequal transmission of alleles from the parental zygote to progeny spores by acting as poison/antidote system, leading to poisoning of progeny that do not inherit the allele. May possess DNA nuclease activity that leads to spore killing, and a kinase activity that confers resistance to the nuclease activity. Can suppress meiotic drive by the P.comata SPOK1 protein. The sequence is that of Meiotic driver SPOK4 from Podospora anserina (Pleurage anserina).